A 199-amino-acid chain; its full sequence is Adenylate kinase (199 aa).

Residue 10–15 (GAGKGT) participates in ATP binding. An NMP region spans residues 30 to 59 (STGDMLRAAVAARTPVGLQAKSIMESGGLV). Residues Thr31, Arg36, 57–59 (GLV), 85–88 (GFPR), and Gln92 contribute to the AMP site. Positions 126-142 (KRAAETLARGEAVRKDD) are LID. Residue Arg127 coordinates ATP. AMP is bound by residues Arg139 and Arg150. Ala178 contacts ATP.

The protein belongs to the adenylate kinase family. As to quaternary structure, monomer.

Its subcellular location is the cytoplasm. The catalysed reaction is AMP + ATP = 2 ADP. It participates in purine metabolism; AMP biosynthesis via salvage pathway; AMP from ADP: step 1/1. Its function is as follows. Catalyzes the reversible transfer of the terminal phosphate group between ATP and AMP. Plays an important role in cellular energy homeostasis and in adenine nucleotide metabolism. The polypeptide is Adenylate kinase (Methylobacterium nodulans (strain LMG 21967 / CNCM I-2342 / ORS 2060)).